The following is a 142-amino-acid chain: Small ribosomal subunit protein uS11c (142 aa).

It belongs to the universal ribosomal protein uS11 family. As to quaternary structure, part of the 30S ribosomal subunit.

It localises to the plastid. The protein resides in the chloroplast. The sequence is that of Small ribosomal subunit protein uS11c from Welwitschia mirabilis (Tree tumbo).